Reading from the N-terminus, the 508-residue chain is MALGRPSYRGGRVSGGRDPDFAELSSSLEQDREIFHCDVWNSVVHAVSLWEAGRIDRSTAAGIVEGLVTVLEEGPDRLPEDAEDVHEAIESRLHEVVGEEAGWLQLGRSRNDQVATSVRMRLRERALDLSRELVGLGRALLDLAREHAEVPIAGYTHLKRAQPCTIGFWMSTYAAAVARSARGLLRVPGMDECPLGCSAFPGSTVPVDRHREAALLGFRKPARHCGEATALRGPILEFLGRLATAASELTRLAGDLIQLCSDELGVVEPPDELSSTSSVMPHKKNPDALELVRAELTVVAGLKGLGDAVHGKLPMFYNRDLQVLNGLLWDSVNRFELCVRVLRKVVEGLDVDEEAARGTVLGSHAAAVDLAELVAERAGLTFREAHKVVGRVSARLDREGVPMSPERADRVVEELEREGVKLRVEEVREVLSLKRTLRRPVEGSTDPGRLEVTLDRLRAELAAAERLEGTWRGRIERALRATEAAVNRLGVEGFAEVYRGYWDGEAPG.

It belongs to the lyase 1 family. Argininosuccinate lyase subfamily.

It is found in the cytoplasm. It catalyses the reaction 2-(N(omega)-L-arginino)succinate = fumarate + L-arginine. Its pathway is amino-acid biosynthesis; L-arginine biosynthesis; L-arginine from L-ornithine and carbamoyl phosphate: step 3/3. In Methanopyrus kandleri (strain AV19 / DSM 6324 / JCM 9639 / NBRC 100938), this protein is Argininosuccinate lyase.